The primary structure comprises 88 residues: Large ribosomal subunit protein bL27 (88 aa).

This sequence belongs to the bacterial ribosomal protein bL27 family.

This chain is Large ribosomal subunit protein bL27, found in Acidobacterium capsulatum (strain ATCC 51196 / DSM 11244 / BCRC 80197 / JCM 7670 / NBRC 15755 / NCIMB 13165 / 161).